Reading from the N-terminus, the 1654-residue chain is MAQKPNFLKKLISAGLVTASTATIVASFAGSAMGAAIQQNRTTNGAATTVDGAGFDQTAAPANVGVALNAVITANANNGINFNTPAGSFNGLLLNTANNLAVTVSEDTTLGFITNVVHNAHSFNLTLNAGKTLTITGQGVTNAQAAATKNAQNVVVQFNNGAAIDNNDLKGVGRIDFGAPASTLVFNLANPTTQKAPLILGDNAVIANGVNGTLNVTNGFIQVSNKSFATVKAINIADGQGIIFNTDANNANTLNLQAGGTTINFTGTDGTGRLVLLSKHAAATNFNITGSLGGNLKGVIEFNTVAVDGQLTANAGAANAVIGTNNGAGRAAGFVVSVDNGKVATIDGQVYAKDMVIQSANATGQVNFRHIVDVGADGTTAFKTAASKVTITQDSNFGNTDFGNLAAQIKVPNAITLTGNFTGDASNPGNTAGVITFDANGTLESASADANVAVTNNITAIEASGAGVVQLSGTHAAELRLGNAGSIFKLADGTVINGKVNQTALVGGALAAGTITLDGSATITGDIGNAGGAAALQRITLANDAKKTLTLGGANIIGAGGGTIDLQANGGTIKLTSTQNNIVVDFDLAIATDQTGVVDASSLTNAQTLTINGKIGTIGANNKTLGQFNIGSSKTVLSNGNVAINELVIGNDGAVQFAHDTYLITRTTNAAGQGKIIFNPVVNNGTTLAAGTNLGSATNPLAEINFGSKGVNVDTVLNVGEGVNLYATNITTTDANVGSFVFNAGGTNIVSGTVGGQQGNKFNTVALENGTTVKFLGNATFNGNTTIAANSTLQIGGNYTADCVASADGTGIVEFVNTGPITVTLNKQAAPVNALKQITVSGPGNVVINEIGNAGNHHGAVTDTIAFENSSLGAVVFLPRGIPFNDAGNTMPLTIKSTVGNKTAKGFDVPSVVVLGVDSVIADGQVIGDQNNIVGLGLGSDNGIIVNATTLYAGISTLNNNQGTVTLSGGVPNTPGTVYGLGTGIGASKFKQVTFTTDYNNLGNIIATNATINDGVTVTTGGIAGIGFDGKITLGSVNGNGNVRFADGILSNSTSMIGTTKANNGTVTYLGNAFVGNIGDSDTPVASVRFTGSDSGAGLQGNIYSQVIDFGTYNLGIVNSNIILGGGTTAINGKIDLVTNTLTFASGTSTWGNNTSIETTLTLANGNIGHIVILEGAQVNTTTTGTTTIKVQDNANANFSGTQTYTLIQGGARFNGTLGSPNFAVTGSNRFVNYSLIRAANQDYVITRTNNAENVVTNDIANSPFGGAPGVDQNVTTFVNATNTAAYNNLLLAKNSANSANFVGAIVTDTSAAITNVQLDLAKDIQAQLGNRLGALRYLGTPETAEMAGPEAGAISAAVAAGDEAIDNVAYGIWAKPFYTDAHQSKKGGLAGYKAKTTGVVIGLDTLANDNLMIGAAIGITKTDIKHQDYKKGDKTDVNGFSFSLYGAQQLVKNFFAQGSAIFSLNQVKNKSQRYFFDANGNMSKQIAAGHYDNMTFGGNLTVGYDYNAMQGVLVTPMAGLSYLKSSDENYKETGTTVANKQVNSKFSDRTDLIVGAKVAGSTMNITDLAVYPEVHAFVVHKVTGRLSKTQSVLDGQVTPCINQPDRTTKTSYNLGLSASIRSDAKMEYGIGYDAQISSKYTAHQGTLKVRVNF.

Residues 1334–1361 (GALRYLGTPETAEMAGPEAGAISAAVAA) constitute a propeptide that is removed on maturation. The 289-residue stretch at 1366–1654 (IDNVAYGIWA…QGTLKVRVNF (289 aa)) folds into the Autotransporter domain.

It belongs to the rickettsiae OmpA/OmpB family. Post-translationally, the N-terminus is blocked.

It localises to the periplasm. The protein resides in the secreted. It is found in the cell surface. Its subcellular location is the cell outer membrane. Its function is as follows. The 120 kDa surface-exposed protein is a major structural protein which may play a role as a rickettsial virulence factor and/or immunogen during infection. The 32 kDa beta peptide may serve as a membrane anchor. This Rickettsia rickettsii protein is Outer membrane protein B (ompB).